A 562-amino-acid polypeptide reads, in one-letter code: Acetolactate synthase isozyme 1 large subunit (562 aa).

Glu-60 lines the thiamine diphosphate pocket. FAD-binding positions include Arg-162, 264–285 (HGVRSTNYILQEADLLIVLGAR), and 307–326 (DIDRAELGKIKQPHVAIQAD). Residues 393 to 473 (QHQMWTAQAY…VKIILMNNEA (81 aa)) are thiamine pyrophosphate binding. Asp-444 and Asn-471 together coordinate Mg(2+).

Belongs to the TPP enzyme family. As to quaternary structure, dimer of large and small chains. It depends on Mg(2+) as a cofactor. Requires thiamine diphosphate as cofactor.

It catalyses the reaction 2 pyruvate + H(+) = (2S)-2-acetolactate + CO2. It functions in the pathway amino-acid biosynthesis; L-isoleucine biosynthesis; L-isoleucine from 2-oxobutanoate: step 1/4. Its pathway is amino-acid biosynthesis; L-valine biosynthesis; L-valine from pyruvate: step 1/4. In Escherichia coli (strain K12), this protein is Acetolactate synthase isozyme 1 large subunit (ilvB).